A 318-amino-acid polypeptide reads, in one-letter code: Bis(5'-nucleosyl)-tetraphosphatase, symmetrical (318 aa).

Residues Pro269–Asp318 form a disordered region. A compositionally biased stretch (basic residues) spans Ala282 to Gly297. Residues Ala309–Asp318 are compositionally biased toward pro residues.

This sequence belongs to the Ap4A hydrolase family.

The enzyme catalyses P(1),P(4)-bis(5'-adenosyl) tetraphosphate + H2O = 2 ADP + 2 H(+). In terms of biological role, hydrolyzes diadenosine 5',5'''-P1,P4-tetraphosphate to yield ADP. The sequence is that of Bis(5'-nucleosyl)-tetraphosphatase, symmetrical from Xanthomonas oryzae pv. oryzae (strain MAFF 311018).